The primary structure comprises 98 residues: Aspartyl/glutamyl-tRNA(Asn/Gln) amidotransferase subunit C (98 aa).

The interval 70–98 is disordered; the sequence is PSLTPEQALSGAPAQEQQRFKVPQILGED.

Belongs to the GatC family. In terms of assembly, heterotrimer of A, B and C subunits.

The enzyme catalyses L-glutamyl-tRNA(Gln) + L-glutamine + ATP + H2O = L-glutaminyl-tRNA(Gln) + L-glutamate + ADP + phosphate + H(+). It catalyses the reaction L-aspartyl-tRNA(Asn) + L-glutamine + ATP + H2O = L-asparaginyl-tRNA(Asn) + L-glutamate + ADP + phosphate + 2 H(+). Functionally, allows the formation of correctly charged Asn-tRNA(Asn) or Gln-tRNA(Gln) through the transamidation of misacylated Asp-tRNA(Asn) or Glu-tRNA(Gln) in organisms which lack either or both of asparaginyl-tRNA or glutaminyl-tRNA synthetases. The reaction takes place in the presence of glutamine and ATP through an activated phospho-Asp-tRNA(Asn) or phospho-Glu-tRNA(Gln). The protein is Aspartyl/glutamyl-tRNA(Asn/Gln) amidotransferase subunit C of Streptomyces avermitilis (strain ATCC 31267 / DSM 46492 / JCM 5070 / NBRC 14893 / NCIMB 12804 / NRRL 8165 / MA-4680).